The sequence spans 344 residues: tRNA dimethylallyltransferase (344 aa).

Position 19-26 (19-26 (GPTASGKT)) interacts with ATP. 21–26 (TASGKT) contacts substrate.

This sequence belongs to the IPP transferase family. In terms of assembly, monomer. Mg(2+) is required as a cofactor.

The catalysed reaction is adenosine(37) in tRNA + dimethylallyl diphosphate = N(6)-dimethylallyladenosine(37) in tRNA + diphosphate. In terms of biological role, catalyzes the transfer of a dimethylallyl group onto the adenine at position 37 in tRNAs that read codons beginning with uridine, leading to the formation of N6-(dimethylallyl)adenosine (i(6)A). This Bifidobacterium animalis subsp. lactis (strain AD011) protein is tRNA dimethylallyltransferase.